The chain runs to 303 residues: Probable serine acetyltransferase 1 (303 aa).

2 disordered regions span residues Met1–Ala36 and Asn271–Asp290.

Belongs to the transferase hexapeptide repeat family. In terms of assembly, homomultimer.

It catalyses the reaction L-serine + acetyl-CoA = O-acetyl-L-serine + CoA. It participates in amino-acid biosynthesis; L-cysteine biosynthesis; L-cysteine from L-serine: step 1/2. The polypeptide is Probable serine acetyltransferase 1 (SAT1) (Oryza sativa subsp. japonica (Rice)).